Here is a 488-residue protein sequence, read N- to C-terminus: MSLWFCPLTSTLSRQQPIHFIGVGGIGMSALALILVNRGHIVSGSDPRENTTVERLRAQGVRVFRDQSAANINAICSNVDLLPLVVISTAIPKSNPELKAAKLSQLKILHRSDLLAALIQAQPSIAVAGSHGKTTTSTLLTTLLATTDQDPTAVIGGVVPYYDSNGHAGKGRLLVAEADESDGSLVKFQATLGVITNLELDHTDHYADLDELINTMKRFGRGCRRLLANFDCPILKEHFDATAWWSVKTSAGVDFAALPICLNGDQTIADIYEQGKRMGQITLPMPGLHNLSNAMAAIAACRLAGLSFEDLQQGLADLQPPGRRFDFRGTWEGRQIVDDYAHHPSEVSATLAMARLIVTSGRSQLPSPPKRILAVFQPHRYSRTNEFLYEFARALGEADAVLLAPVYSAGENPIQGATSESLANAIRIQHPNLPVAVAENFNQLTLLVQKHSLKGDLVLAMGAGNINNLWRQLTRLDNAKTCPPSLAA.

129–135 (GSHGKTT) is a binding site for ATP.

The protein belongs to the MurCDEF family.

It localises to the cytoplasm. It carries out the reaction UDP-N-acetyl-alpha-D-muramate + L-alanine + ATP = UDP-N-acetyl-alpha-D-muramoyl-L-alanine + ADP + phosphate + H(+). The protein operates within cell wall biogenesis; peptidoglycan biosynthesis. Its function is as follows. Cell wall formation. The chain is UDP-N-acetylmuramate--L-alanine ligase from Prochlorococcus marinus (strain MIT 9303).